Reading from the N-terminus, the 942-residue chain is MKRRAGLGGSMRSVVGFLSQRGLHGDPLLTQDFQRRRLRGCRNLYKKDLLGHFGCVNAIEFSNNGGQWLVSGGDDRRVLLWHMEQAIHSRVKPIQLKGEHHSNIFCLAFNSGNTKVFSGGNDEQVILHDVESSETLDVFAHEDAVYGLSVSPVNDNIFASSSDDGRVLIWDIRESPHGEPFCLANYPSAFHSVMFNPVEPRLLATANSKEGVGLWDIRKPQSSLLRYGGNLSLQSAMSVRFNSNGTQLLALRRRLPPVLYDIHSRLPVFQFDNQGYFNSCTMKSCCFAGDRDQYILSGSDDFNLYMWRIPADPEAGGIGRVVNGAFMVLKGHRSIVNQVRFNPHTYMICSSGVEKIIKIWSPYKQPGCTGDLDGRIEDDSRCLYTHEEYISLVLNSGSGLSHDYANQSVQEDPRMMAFFDSLVRREIEGWSSDSDSDLSESTILQLHAGVSERSGYTDSESSASLPRSPPPTVDESADNAFHLGPLRVTTTNTVASTPPTPTCEDAASRQQRLSALRRYQDKRLLALSNESDSEENVCEVELDTDLFPRPRSPSPEDESSSSSSSSSSEDEEELNERRASTWQRNAMRRRQKTTREDKPSAPIKPTNTYIGEDNYDYPQIKVDDLSSSPTSSPERSTSTLEIQPSRASPTSDIESVERKIYKAYKWLRYSYISYSNNKDGETSLVTGEADEGRAGTSHKDNPAPSSSKEACLNIAMAQRNQDLPPEGCSKDTFKEETPRTPSNGPGHEHSSHAWAEVPEGTSQDTGNSGSVEHPFETKKLNGKALSSRAEEPPSPPVPKASGSTLNSGSGNCPRTQSDDSEERSLETICANHNNGRLHPRPPHPHNNGQNLGELEVVAYSSPGHSDTDRDNSSLTGTLLHKDCCGSEMACETPNAGTREDPTDTPATDSSRAVHGHSGLKRQRIELEDTDSENSSSEKKLKT.

WD repeat units lie at residues 51-91 (GHFG…HSRV), 99-139 (EHHS…LDVF), 140-180 (AHED…HGEP), 185-225 (NYPS…SSLL), 277-317 (FNSC…EAGG), and 331-370 (GHRSIVNQVRFNPHTYMICSSGVEKIIKIWSPYKQPGCTG). Disordered regions lie at residues 449 to 478 (GVSERSGYTDSESSASLPRSPPPTVDESAD) and 490 to 509 (TTNTVASTPPTPTCEDAASR). Residues 454 to 465 (SGYTDSESSASL) show a composition bias toward polar residues. Residue Thr500 is modified to Phosphothreonine. 7 positions are modified to phosphoserine: Ser531, Ser533, Ser626, Ser628, Ser645, Ser648, and Ser651. 3 disordered regions span residues 544-655 (TDLF…DIES), 676-824 (NNKD…EERS), and 889-942 (ACET…KLKT). Over residues 625–641 (LSSSPTSSPERSTSTLE) the composition is skewed to low complexity. Composition is skewed to basic and acidic residues over residues 690–701 (DEGRAGTSHKDN) and 728–738 (CSKDTFKEETP). Residues 760–770 (GTSQDTGNSGS) show a composition bias toward polar residues. Ser794 is modified (phosphoserine). Polar residues predominate over residues 801 to 815 (SGSTLNSGSGNCPRT).

In terms of assembly, interacts with DDB1, CUL4A or CUL4B. Interacts with L3MBTL3. Interacts with DNMT1. Interacts with E2F1. Interacts with SOX2. Ubiquitous.

It functions in the pathway protein modification; protein ubiquitination. Is a substrate receptor for the CUL4-DDB1 E3 ubiquitin-protein ligase complex (CRL4). The complex CRL4-DCAF5 is involved in the ubiquitination of a set of methylated non-histone proteins, including SOX2, DNMT1 and E2F1. This Homo sapiens (Human) protein is DDB1- and CUL4-associated factor 5 (DCAF5).